The following is a 92-amino-acid chain: Neurophysin 2 (92 aa).

Intrachain disulfides connect cysteine 7–cysteine 51, cysteine 10–cysteine 24, cysteine 18–cysteine 41, cysteine 25–cysteine 31, cysteine 58–cysteine 70, cysteine 64–cysteine 82, and cysteine 71–cysteine 76.

It belongs to the vasopressin/oxytocin family.

Its subcellular location is the secreted. Its function is as follows. Neurophysin 2 specifically binds the midbrain peptide hormone vasopressin. This is Neurophysin 2 (AVP) from Equus caballus (Horse).